The chain runs to 372 residues: Glutamate 5-kinase (372 aa).

Lys14 is a binding site for ATP. Substrate contacts are provided by Ser54, Asp141, and Asn153. 173 to 174 (TD) contributes to the ATP binding site. The 79-residue stretch at 280 to 358 (RGHVVIDAGA…GEIETVLGYM (79 aa)) folds into the PUA domain.

This sequence belongs to the glutamate 5-kinase family.

The protein resides in the cytoplasm. It catalyses the reaction L-glutamate + ATP = L-glutamyl 5-phosphate + ADP. It participates in amino-acid biosynthesis; L-proline biosynthesis; L-glutamate 5-semialdehyde from L-glutamate: step 1/2. Its function is as follows. Catalyzes the transfer of a phosphate group to glutamate to form L-glutamate 5-phosphate. The polypeptide is Glutamate 5-kinase (Burkholderia ambifaria (strain ATCC BAA-244 / DSM 16087 / CCUG 44356 / LMG 19182 / AMMD) (Burkholderia cepacia (strain AMMD))).